The chain runs to 200 residues: Endoribonuclease YbeY (200 aa).

3 residues coordinate Zn(2+): His120, His124, and His130.

Belongs to the endoribonuclease YbeY family. Requires Zn(2+) as cofactor.

The protein resides in the cytoplasm. Its function is as follows. Single strand-specific metallo-endoribonuclease involved in late-stage 70S ribosome quality control and in maturation of the 3' terminus of the 16S rRNA. In Corynebacterium efficiens (strain DSM 44549 / YS-314 / AJ 12310 / JCM 11189 / NBRC 100395), this protein is Endoribonuclease YbeY.